The following is a 276-amino-acid chain: F-actin-capping protein subunit alpha (276 aa).

The protein belongs to the F-actin-capping protein alpha subunit family. As to quaternary structure, heterodimer of an alpha and a beta subunit.

It is found in the cytoplasm. It localises to the cytoskeleton. Functionally, F-actin-capping proteins bind in a Ca(2+)-independent manner to the fast growing ends of actin filaments (barbed end) thereby blocking the exchange of subunits at these ends. Unlike other capping proteins (such as gelsolin and severin), these proteins do not sever actin filaments. In Aspergillus fumigatus (strain ATCC MYA-4609 / CBS 101355 / FGSC A1100 / Af293) (Neosartorya fumigata), this protein is F-actin-capping protein subunit alpha (cap1).